We begin with the raw amino-acid sequence, 178 residues long: Probetacellulin (178 aa).

An N-terminal signal peptide occupies residues Met1–Ala31. The Extracellular segment spans residues Asp32–Gln118. A glycan (N-linked (GlcNAc...) asparagine) is linked at Asn34. Residues His65–Glu105 enclose the EGF-like domain. Cystine bridges form between Cys69–Cys82, Cys77–Cys93, and Cys95–Cys104. Residues Leu112–Ala178 constitute a propeptide, removed in mature form. The chain crosses the membrane as a helical span at residues Ile119 to Cys139. Residues Thr140–Ala178 are Cytoplasmic-facing.

As to quaternary structure, monomer. Interacts with EGFR and ERBB4. As to expression, synthesized in several tissues and tumor cells. Predominantly expressed in pancreas and small intestine.

The protein localises to the secreted. The protein resides in the extracellular space. It localises to the cell membrane. Growth factor that binds to EGFR, ERBB4 and other EGF receptor family members. Potent mitogen for retinal pigment epithelial cells and vascular smooth muscle cells. In Homo sapiens (Human), this protein is Probetacellulin (BTC).